The sequence spans 149 residues: Calmodulin, striated muscle (149 aa).

4 EF-hand domains span residues 8 to 43 (EQIA…LGQN), 44 to 79 (PTEA…KMRD), 81 to 116 (DSEE…LGEK), and 117 to 149 (LTDE…MTEK). Residues aspartate 21, aspartate 23, aspartate 25, cysteine 27, glutamate 32, aspartate 57, aspartate 59, serine 61, threonine 63, glutamate 68, aspartate 94, aspartate 96, asparagine 98, tyrosine 100, and glutamate 105 each contribute to the Ca(2+) site. The residue at position 116 (lysine 116) is an N6,N6,N6-trimethyllysine. Ca(2+)-binding residues include aspartate 130, asparagine 132, aspartate 134, glutamine 136, and glutamate 141.

Belongs to the calmodulin family.

In Gallus gallus (Chicken), this protein is Calmodulin, striated muscle (CCM1).